A 348-amino-acid chain; its full sequence is Phosphoribosylformylglycinamidine cyclo-ligase (348 aa).

The protein belongs to the AIR synthase family.

It is found in the cytoplasm. The catalysed reaction is 2-formamido-N(1)-(5-O-phospho-beta-D-ribosyl)acetamidine + ATP = 5-amino-1-(5-phospho-beta-D-ribosyl)imidazole + ADP + phosphate + H(+). Its pathway is purine metabolism; IMP biosynthesis via de novo pathway; 5-amino-1-(5-phospho-D-ribosyl)imidazole from N(2)-formyl-N(1)-(5-phospho-D-ribosyl)glycinamide: step 2/2. The polypeptide is Phosphoribosylformylglycinamidine cyclo-ligase (Cereibacter sphaeroides (strain KD131 / KCTC 12085) (Rhodobacter sphaeroides)).